The chain runs to 241 residues: Small ribosomal subunit protein uS2 (241 aa).

The protein belongs to the universal ribosomal protein uS2 family.

The polypeptide is Small ribosomal subunit protein uS2 (Pectobacterium carotovorum subsp. carotovorum (strain PC1)).